A 150-amino-acid polypeptide reads, in one-letter code: D-aminoacyl-tRNA deacylase (150 aa).

Residues 140–141 (GP) carry the Gly-cisPro motif, important for rejection of L-amino acids motif.

Belongs to the DTD family. Homodimer.

It is found in the cytoplasm. It carries out the reaction glycyl-tRNA(Ala) + H2O = tRNA(Ala) + glycine + H(+). It catalyses the reaction a D-aminoacyl-tRNA + H2O = a tRNA + a D-alpha-amino acid + H(+). In terms of biological role, an aminoacyl-tRNA editing enzyme that deacylates mischarged D-aminoacyl-tRNAs. Also deacylates mischarged glycyl-tRNA(Ala), protecting cells against glycine mischarging by AlaRS. Acts via tRNA-based rather than protein-based catalysis; rejects L-amino acids rather than detecting D-amino acids in the active site. By recycling D-aminoacyl-tRNA to D-amino acids and free tRNA molecules, this enzyme counteracts the toxicity associated with the formation of D-aminoacyl-tRNA entities in vivo and helps enforce protein L-homochirality. The chain is D-aminoacyl-tRNA deacylase (DTD1) from Eremothecium gossypii (strain ATCC 10895 / CBS 109.51 / FGSC 9923 / NRRL Y-1056) (Yeast).